The following is a 268-amino-acid chain: Interleukin-1 beta (268 aa).

Residues 1–116 (MATVPELNCE…WDDDDLLVCD (116 aa)) constitute a propeptide that is removed on maturation.

The protein belongs to the IL-1 family. Monomer. In its precursor form, weakly interacts with full-length MEFV; the mature cytokine does not interact at all. Interacts with integrins ITGAV:ITGBV and ITGA5:ITGB1; integrin-binding is required for IL1B signaling. Interacts with cargo receptor TMED10; the interaction is direct and is required for the secretion of IL1B mature form. Interacts with HSP90AB1; the interaction facilitates cargo translocation into the ERGIC. Interacts with HSP90B1; the interaction facilitates cargo translocation into the ERGIC.

It is found in the cytoplasm. It localises to the cytosol. Its subcellular location is the secreted. The protein resides in the lysosome. The protein localises to the extracellular exosome. Potent pro-inflammatory cytokine. Initially discovered as the major endogenous pyrogen, induces prostaglandin synthesis, neutrophil influx and activation, T-cell activation and cytokine production, B-cell activation and antibody production, and fibroblast proliferation and collagen production. Promotes Th17 differentiation of T-cells. Synergizes with IL12/interleukin-12 to induce IFNG synthesis from T-helper 1 (Th1) cells. Plays a role in angiogenesis by inducing VEGF production synergistically with TNF and IL6. Involved in transduction of inflammation downstream of pyroptosis: its mature form is specifically released in the extracellular milieu by passing through the gasdermin-D (GSDMD) pore. The protein is Interleukin-1 beta of Rattus norvegicus (Rat).